The chain runs to 868 residues: LPS-assembly protein LptD (868 aa).

The N-terminal stretch at M1–A24 is a signal peptide.

This sequence belongs to the LptD family. In terms of assembly, component of the lipopolysaccharide transport and assembly complex. Interacts with LptE and LptA.

Its subcellular location is the cell outer membrane. Its function is as follows. Together with LptE, is involved in the assembly of lipopolysaccharide (LPS) at the surface of the outer membrane. The protein is LPS-assembly protein LptD of Francisella tularensis subsp. holarctica (strain LVS).